Here is a 65-residue protein sequence, read N- to C-terminus: Large ribosomal subunit protein bL31 (65 aa).

Positions 16, 18, 36, and 39 each coordinate Zn(2+).

This sequence belongs to the bacterial ribosomal protein bL31 family. Type A subfamily. In terms of assembly, part of the 50S ribosomal subunit. Zn(2+) is required as a cofactor.

In terms of biological role, binds the 23S rRNA. This Geobacter sulfurreducens (strain ATCC 51573 / DSM 12127 / PCA) protein is Large ribosomal subunit protein bL31.